A 664-amino-acid chain; its full sequence is Intraflagellar transport protein 70A2 (664 aa).

TPR repeat units lie at residues 11-44 (DGEF…SPRS), 45-78 (RAGL…HPEL), 153-186 (PDGL…SGYQ), 188-220 (DVSY…GIRQ), 395-423 (QVQE…EKYI), 424-456 (PVLM…CNDH), and 458-491 (VWKL…NYDN). Residues 507–534 (YIMTSQNEEAEELMRKIEKEEEQLSYGD) are a coiled coil. One copy of the TPR 8 repeat lies at 543 to 576 (CIVNLVIGTLYCAKGNYDFGISRVIKSLEPYHKK).

It belongs to the TTC30/dfy-1/fleer family. In terms of assembly, interacts wit the IFT B complex component IFT52.

It localises to the cell projection. The protein resides in the cilium. In terms of biological role, required for polyglutamylation of axonemal tubulin. Plays a role in anterograde intraflagellar transport (IFT), the process by which cilia precursors are transported from the base of the cilium to the site of their incorporation at the tip. In Rattus norvegicus (Rat), this protein is Intraflagellar transport protein 70A2 (Ift70a2).